The following is a 205-amino-acid chain: Molybdenum cofactor guanylyltransferase (205 aa).

Residues 14–16 (LAG), lysine 27, aspartate 77, and aspartate 107 contribute to the GTP site. Aspartate 107 is a binding site for Mg(2+).

The protein belongs to the MobA family. Monomer. Mg(2+) serves as cofactor.

It localises to the cytoplasm. It catalyses the reaction Mo-molybdopterin + GTP + H(+) = Mo-molybdopterin guanine dinucleotide + diphosphate. Transfers a GMP moiety from GTP to Mo-molybdopterin (Mo-MPT) cofactor (Moco or molybdenum cofactor) to form Mo-molybdopterin guanine dinucleotide (Mo-MGD) cofactor. The chain is Molybdenum cofactor guanylyltransferase from Burkholderia vietnamiensis (strain G4 / LMG 22486) (Burkholderia cepacia (strain R1808)).